Consider the following 1384-residue polypeptide: Sterol 3-beta-glucosyltransferase (1384 aa).

Disordered stretches follow at residues 1–64, 86–189, and 204–229; these read MPNM…DGQL, ARFD…TPRA, and DKKQ…QSCA. Residues 7–19 show a composition bias toward basic and acidic residues; that stretch reads LLEDAKRRVDRRL. Residues 21–36 show a composition bias toward low complexity; that stretch reads ASRQSISSSRIFSSAF. Residues 38–47 are compositionally biased toward basic and acidic residues; it reads DRLKDDHDAQ. Low complexity predominate over residues 146–156; that stretch reads LRSLKPSPKSS. The segment covering 158-172 has biased composition (polar residues); sequence GTETTVQTEPPTSDE. A compositionally biased stretch (low complexity) spans 174-189; it reads SPLASPRRARSATPRA. Residues 209–229 show a composition bias toward polar residues; the sequence is ADQPSSSTKGETDGTSEQSCA. The region spanning 237–284 is the GRAM 1 domain; that stretch reads KEMFGFEMPEKVLMEYACSLLQNILLQGYMYVTEGHICFYAYLPRKSA. One can recognise a PH domain in the interval 285-384; it reads VTIRSGYLHK…WVKALQKVIF (100 aa). Disordered stretches follow at residues 457 to 526 and 560 to 629; these read MKTS…RQRD and NRSD…VNSS. Polar residues-rich tracts occupy residues 458 to 473, 483 to 494, and 560 to 572; these read KTSQ…TSPA, WSLNSDLSQSRG, and NRSD…TIHT. A compositionally biased stretch (basic and acidic residues) spans 578-588; it reads PSGDRTGRRLS. Positions 604–629 are enriched in polar residues; the sequence is RNGQEMQYASSDSDQGTQHPSKVNSS. The region spanning 714-817 is the GRAM 2 domain; that stretch reads RFRAHFALPS…RDDCAVTVHQ (104 aa). UDP-alpha-D-glucose contacts are provided by S901, R902, D904, A1204, H1206, H1219, G1223, T1224, D1243, and Q1244. Residues 1322–1336 are compositionally biased toward polar residues; the sequence is VSSTPFSPTPSAKTT. The interval 1322–1350 is disordered; sequence VSSTPFSPTPSAKTTAEQEEDDVDDSEEW. Over residues 1338 to 1350 the composition is skewed to acidic residues; that stretch reads EQEEDDVDDSEEW.

The protein belongs to the glycosyltransferase 28 family.

Its subcellular location is the cytoplasm. The protein resides in the preautophagosomal structure membrane. It catalyses the reaction a sterol + UDP-alpha-D-glucose = a sterol 3-beta-D-glucoside + UDP + H(+). The enzyme catalyses ergosterol + UDP-alpha-D-glucose = ergosteryl 3-beta-D-glucoside + UDP + H(+). In terms of biological role, sterol glycosyltransferase responsible for the glycosylation of ergosterol to form ergosterol-glucoside. Involved in cytoplasm to vacuole transport (Cvt), pexophagy or nonselective autophagy. The chain is Sterol 3-beta-glucosyltransferase from Aspergillus oryzae (strain ATCC 42149 / RIB 40) (Yellow koji mold).